We begin with the raw amino-acid sequence, 211 residues long: Imidazole glycerol phosphate synthase subunit HisH (211 aa).

The region spanning 3-211 (VVAVIDYEMG…VSQVREKIAA (209 aa)) is the Glutamine amidotransferase type-1 domain. Residue Cys81 is the Nucleophile of the active site. Residues His186 and Glu188 contribute to the active site.

In terms of assembly, heterodimer of HisH and HisF.

It is found in the cytoplasm. It carries out the reaction 5-[(5-phospho-1-deoxy-D-ribulos-1-ylimino)methylamino]-1-(5-phospho-beta-D-ribosyl)imidazole-4-carboxamide + L-glutamine = D-erythro-1-(imidazol-4-yl)glycerol 3-phosphate + 5-amino-1-(5-phospho-beta-D-ribosyl)imidazole-4-carboxamide + L-glutamate + H(+). It catalyses the reaction L-glutamine + H2O = L-glutamate + NH4(+). It functions in the pathway amino-acid biosynthesis; L-histidine biosynthesis; L-histidine from 5-phospho-alpha-D-ribose 1-diphosphate: step 5/9. In terms of biological role, IGPS catalyzes the conversion of PRFAR and glutamine to IGP, AICAR and glutamate. The HisH subunit catalyzes the hydrolysis of glutamine to glutamate and ammonia as part of the synthesis of IGP and AICAR. The resulting ammonia molecule is channeled to the active site of HisF. In Trichormus variabilis (strain ATCC 29413 / PCC 7937) (Anabaena variabilis), this protein is Imidazole glycerol phosphate synthase subunit HisH.